We begin with the raw amino-acid sequence, 279 residues long: Cell death abnormality protein 2 (279 aa).

One can recognise an SH2 domain in the interval 14 to 115 (FYFPGMSREE…EASLLAAYKK (102 aa)). The 61-residue stretch at 116 to 176 (PIIEVVVGTF…PANYVQIQME (61 aa)) folds into the SH3 1 domain. Residues 181–213 (RTSKGASQSSIGSSGGGAERFSSASTSSDNIEL) form a disordered region. Residues 202 to 211 (SSASTSSDNI) are compositionally biased toward polar residues. In terms of domain architecture, SH3 2 spans 214–277 (QPRLPAKAKV…PHTYLRFTAV (64 aa)).

It belongs to the CRK family. As to quaternary structure, interacts with ced-5 (via C-terminus which contains a candidate SH3-binding, proline-rich region). Forms a ternary complex with ced-5 and ced-12. Interacts (via SH2 domain) with src-1 (when activated and phosphorylated at 'Tyr-416').

Required for cell migration and engulfment of cell corpses but not for programmed cell death/apoptosis. Has a role in the migration of the 2 gonadal distal tip cells (DTCs). Plays a role in protecting dopaminergic neurons from oxidative stress-induced degeneration. In Caenorhabditis elegans, this protein is Cell death abnormality protein 2.